Here is a 737-residue protein sequence, read N- to C-terminus: tRNA-dihydrouridine(47) synthase [NAD(P)(+)] (737 aa).

Composition is skewed to basic and acidic residues over residues 1-11 and 24-33; these read MESQETAKRPI and PATKRVKLDD. The disordered stretch occupies residues 1–127; that stretch reads MESQETAKRP…GKKKRPKGQN (127 aa). Positions 35–44 are enriched in low complexity; sequence PVPQIQEEPS. The segment covering 57–82 has biased composition (basic and acidic residues); it reads EDEKPTEQRQDDRDKRRGIAPIKKEY. 2 C3H1-type zinc fingers span residues 142–166 and 187–208; these read CNSV…NALH and CPVW…VESH. FMN is bound by residues 332–334 and glutamine 407; that span reads PLT. The Proton donor role is filled by cysteine 439. Residues lysine 479, histidine 520, 577-579, and 601-602 contribute to the FMN site; these read NGD and GR.

Belongs to the Dus family. Dus3 subfamily. FMN is required as a cofactor.

It localises to the cytoplasm. The protein localises to the nucleus. It catalyses the reaction 5,6-dihydrouridine(47) in tRNA + NAD(+) = uridine(47) in tRNA + NADH + H(+). It carries out the reaction 5,6-dihydrouridine(47) in tRNA + NADP(+) = uridine(47) in tRNA + NADPH + H(+). The catalysed reaction is a 5,6-dihydrouridine in mRNA + NAD(+) = a uridine in mRNA + NADH + H(+). The enzyme catalyses a 5,6-dihydrouridine in mRNA + NADP(+) = a uridine in mRNA + NADPH + H(+). Functionally, catalyzes the synthesis of dihydrouridine, a modified base found in the D-loop of most tRNAs. Specifically modifies U47 in cytoplasmic tRNAs. Catalyzes the synthesis of dihydrouridine in some mRNAs, thereby affecting their translation. This Neurospora crassa (strain ATCC 24698 / 74-OR23-1A / CBS 708.71 / DSM 1257 / FGSC 987) protein is tRNA-dihydrouridine(47) synthase [NAD(P)(+)] (dus-3).